Consider the following 237-residue polypeptide: Mediator of RNA polymerase II transcription subunit 20 (237 aa).

It belongs to the Mediator complex subunit 20 family. Component of the Mediator complex.

It is found in the nucleus. Functionally, component of the Mediator complex, a coactivator involved in the regulated transcription of nearly all RNA polymerase II-dependent genes. Mediator functions as a bridge to convey information from gene-specific regulatory proteins to the basal RNA polymerase II transcription machinery. Mediator is recruited to promoters by direct interactions with regulatory proteins and serves as a scaffold for the assembly of a functional preinitiation complex with RNA polymerase II and the general transcription factors. The polypeptide is Mediator of RNA polymerase II transcription subunit 20 (SRB2) (Scheffersomyces stipitis (strain ATCC 58785 / CBS 6054 / NBRC 10063 / NRRL Y-11545) (Yeast)).